Here is a 227-residue protein sequence, read N- to C-terminus: Urease subunit gamma/beta (227 aa).

The segment at 1–101 is urease gamma; it reads MRLTPTERDR…LAVVADPVGG (101 aa). The interval 102–227 is urease beta; it reads GGLGDDAPGA…AACGYLGADR (126 aa).

It in the N-terminal section; belongs to the urease gamma subunit family. In the C-terminal section; belongs to the urease beta subunit family. As to quaternary structure, heterohexamer of 3 UreC (alpha) and 3 UreAB (gamma/beta) subunits.

It is found in the cytoplasm. The catalysed reaction is urea + 2 H2O + H(+) = hydrogencarbonate + 2 NH4(+). It participates in nitrogen metabolism; urea degradation; CO(2) and NH(3) from urea (urease route): step 1/1. The chain is Urease subunit gamma/beta from Streptomyces coelicolor (strain ATCC BAA-471 / A3(2) / M145).